The primary structure comprises 207 residues: Guanylate kinase (207 aa).

Positions 4-184 (GTLYIVSAPS…ALSDLKTIIR (181 aa)) constitute a Guanylate kinase-like domain. 11-18 (APSGAGKS) serves as a coordination point for ATP.

This sequence belongs to the guanylate kinase family.

Its subcellular location is the cytoplasm. The catalysed reaction is GMP + ATP = GDP + ADP. It catalyses the reaction dZMP + ATP = dZDP + ADP. Its pathway is purine metabolism. Essential for recycling GMP and indirectly, cGMP. In terms of biological role, (Microbial infection) Catalyzes the phosphorylation of dZMP to dZDP, when the bacterium is infected by a phage that produces the substrate for the synthesis of dZTP (2- amino-2'-deoxyadenosine 5'-triphosphate), which is then used by the phage as a DNA polymerase substrate. This is Guanylate kinase from Salmonella choleraesuis (strain SC-B67).